Reading from the N-terminus, the 151-residue chain is Large ribosomal subunit protein bL9 (151 aa).

It belongs to the bacterial ribosomal protein bL9 family.

Functionally, binds to the 23S rRNA. In Dehalococcoides mccartyi (strain ATCC BAA-2266 / KCTC 15142 / 195) (Dehalococcoides ethenogenes (strain 195)), this protein is Large ribosomal subunit protein bL9.